The primary structure comprises 619 residues: ATP-dependent DNA helicase RecQ (619 aa).

A Helicase ATP-binding domain is found at 37–205 (INAALNGQDA…LRHLNLKNLH (169 aa)). 50 to 57 (MATGNGKS) is an ATP binding site. Residues 149 to 152 (DEAH) carry the DEAH box motif. In terms of domain architecture, Helicase C-terminal spans 229–374 (QLTRFVLAQK…QIEQHKLEAI (146 aa)). Residues cysteine 383, cysteine 400, cysteine 403, and cysteine 406 each contribute to the Zn(2+) site. An HRDC domain is found at 535 to 615 (ANYDKDLFAR…QEHKAILANA (81 aa)).

Belongs to the helicase family. RecQ subfamily. It depends on Mg(2+) as a cofactor. Zn(2+) is required as a cofactor.

It carries out the reaction Couples ATP hydrolysis with the unwinding of duplex DNA by translocating in the 3'-5' direction.. The catalysed reaction is ATP + H2O = ADP + phosphate + H(+). An ATP-dependent DNA helicase which unwinds DNA in a 3'-5' direction. Plays a role in recombination. The sequence is that of ATP-dependent DNA helicase RecQ from Haemophilus influenzae (strain ATCC 51907 / DSM 11121 / KW20 / Rd).